Consider the following 410-residue polypeptide: Kelch domain-containing protein 10 (410 aa).

Residues 1–40 (MSAAQGWDRNRRRGGGAAGGASGVSGAGAAGGGRGTGQLN) are disordered. An Omega-N-methylarginine modification is found at arginine 13. The segment covering 15–36 (GGAAGGASGVSGAGAAGGGRGT) has biased composition (gly residues). 6 Kelch repeats span residues 87–154 (GPDN…DVHV), 155–198 (CNVK…GYIY), 199–260 (STDL…IHAY), 261–319 (NLET…LQTF), 320–364 (QWVK…GSLF), and 365–403 (KIWL…GLTQ). The tract at residues 369–410 (VVPSLLELAWEKLLAAFPNLANLSRTQLLHLGLTQELIERLK) is interaction with CUL2.

The protein belongs to the KLHDC10 family. As to quaternary structure, component of a CRL2 E3 ubiquitin-protein ligase complex, also named ECS (Elongin BC-CUL2/5-SOCS-box protein) complex, composed of CUL2, Elongin BC (ELOB and ELOC), RBX1 and substrate-specific adapter KLHDC10. Interacts (via the 6 Kelch repeats) with PPP5C.

The protein localises to the nucleus. It localises to the cytoplasm. It participates in protein modification; protein ubiquitination. Functionally, substrate-recognition component of a Cul2-RING (CRL2) E3 ubiquitin-protein ligase complex of the DesCEND (destruction via C-end degrons) pathway, which recognizes a C-degron located at the extreme C-terminus of target proteins, leading to their ubiquitination and degradation. The C-degron recognized by the DesCEND pathway is usually a motif of less than ten residues and can be present in full-length proteins, truncated proteins or proteolytically cleaved forms. The CRL2(KLHDC10) complex specifically recognizes proteins with a proline-glycine (Pro-Gly) or an alanine tail (CAT tail) at the C-terminus, leading to their ubiquitination and degradation. The CRL2(KLHDC10) complex is involved in the ribosome-associated quality control (RQC) pathway, which mediates the extraction of incompletely synthesized nascent chains from stalled ribosomes: CRL2(KLHDC10) acts downstream of NEMF and recognizes CAT tails associated with stalled nascent chains, leading to their ubiquitination and degradation. Participates in the oxidative stress-induced cell death through MAP3K5 activation. Inhibits PPP5C phosphatase activity on MAP3K5. Acts as a regulator of necroptosis. This is Kelch domain-containing protein 10 from Rattus norvegicus (Rat).